A 191-amino-acid chain; its full sequence is Scytalone dehydratase PfmaJ (191 aa).

Substrate is bound by residues Tyr25, Tyr45, and Phe48. Catalysis depends on residues His80 and His105. Asn126 is a substrate binding site.

This sequence belongs to the scytalone dehydratase family. Homotrimer. Each subunit contains an active site, located in the central part of the hydrophobic core of the monomer, which functions independently.

It is found in the endosome. The enzyme catalyses scytalone = 1,3,8-trihydroxynaphthalene + H2O. The protein operates within pigment biosynthesis; melanin biosynthesis. Functionally, scytalone dehydratase involved the biosynthesis of dihydroxynaphthalene (DHN)-melanin, a bluish-green pigment forming a dark layer in the conidial wall that protects the conidia from UV radiations. The first step of the pathway is the production of the pentaketide 1,3,6,8-tetrahydroxynaphthalene (1,3,6,8-THN or T4HN) by the polyketide synthase PfmaE though condensation of acetyl-CoA with malonyl-CoA. T4HN is not stable and easily oxidizes into the stable form flaviolin. T4HN is also substrate of the hydroxynaphthalene reductase PfmaG to yield scytalone. The scytalone dehydratase PfmaJ then reduces scytalone to 1,3,8-THN. 1,3,8-THN is then substrate of the hydroxynaphthalene reductase PfmaI to yield vermelone. Vermelone is further converted by the multicopper oxidase PfmaD to 1,8-DHN. Finally the laccase PFICI_06862 transforms 1,8-DHN to DHN-melanin. The roles of the 5-oxoprolinase PfmaA and the proline iminopeptidase PfmaB within the cluster have not been elucidated yet. In Pestalotiopsis fici (strain W106-1 / CGMCC3.15140), this protein is Scytalone dehydratase PfmaJ.